Consider the following 233-residue polypeptide: Small ribosomal subunit protein uS2c (233 aa).

This sequence belongs to the universal ribosomal protein uS2 family.

It localises to the plastid. Its subcellular location is the cyanelle. This is Small ribosomal subunit protein uS2c (rps2) from Cyanophora paradoxa.